A 280-amino-acid polypeptide reads, in one-letter code: Phosphatidylserine decarboxylase proenzyme (280 aa).

Residues Asp-90, His-146, and Ser-247 each act as charge relay system; for autoendoproteolytic cleavage activity in the active site. The Schiff-base intermediate with substrate; via pyruvic acid; for decarboxylase activity role is filled by Ser-247. Ser-247 bears the Pyruvic acid (Ser); by autocatalysis mark.

It belongs to the phosphatidylserine decarboxylase family. PSD-B subfamily. Prokaryotic type I sub-subfamily. In terms of assembly, heterodimer of a large membrane-associated beta subunit and a small pyruvoyl-containing alpha subunit. Pyruvate serves as cofactor. In terms of processing, is synthesized initially as an inactive proenzyme. Formation of the active enzyme involves a self-maturation process in which the active site pyruvoyl group is generated from an internal serine residue via an autocatalytic post-translational modification. Two non-identical subunits are generated from the proenzyme in this reaction, and the pyruvate is formed at the N-terminus of the alpha chain, which is derived from the carboxyl end of the proenzyme. The autoendoproteolytic cleavage occurs by a canonical serine protease mechanism, in which the side chain hydroxyl group of the serine supplies its oxygen atom to form the C-terminus of the beta chain, while the remainder of the serine residue undergoes an oxidative deamination to produce ammonia and the pyruvoyl prosthetic group on the alpha chain. During this reaction, the Ser that is part of the protease active site of the proenzyme becomes the pyruvoyl prosthetic group, which constitutes an essential element of the active site of the mature decarboxylase.

The protein localises to the cell membrane. It catalyses the reaction a 1,2-diacyl-sn-glycero-3-phospho-L-serine + H(+) = a 1,2-diacyl-sn-glycero-3-phosphoethanolamine + CO2. Its pathway is phospholipid metabolism; phosphatidylethanolamine biosynthesis; phosphatidylethanolamine from CDP-diacylglycerol: step 2/2. Functionally, catalyzes the formation of phosphatidylethanolamine (PtdEtn) from phosphatidylserine (PtdSer). In Myxococcus xanthus (strain DK1622), this protein is Phosphatidylserine decarboxylase proenzyme.